We begin with the raw amino-acid sequence, 199 residues long: MPHSERGMVVGLFGGSFNPPHQGHALVAEIAIKRLRLDQLWWMVTPGNPLKSRNQLAPLAERLAESERVAADPRIKVTAFEQTLGTSYTANTLARVKARNPHVHFIWIMGADSLQTFHKWQKWQEIARTFPIAVIDRPGATLSFLSSKMARTFGFARVDEDDARVLWKKRAPAWTFIHGPRSGLSSTAIRNGSSHSDAE.

This sequence belongs to the NadD family.

The enzyme catalyses nicotinate beta-D-ribonucleotide + ATP + H(+) = deamido-NAD(+) + diphosphate. The protein operates within cofactor biosynthesis; NAD(+) biosynthesis; deamido-NAD(+) from nicotinate D-ribonucleotide: step 1/1. Functionally, catalyzes the reversible adenylation of nicotinate mononucleotide (NaMN) to nicotinic acid adenine dinucleotide (NaAD). In Rhizobium johnstonii (strain DSM 114642 / LMG 32736 / 3841) (Rhizobium leguminosarum bv. viciae), this protein is Probable nicotinate-nucleotide adenylyltransferase.